The primary structure comprises 243 residues: Pyridoxine 5'-phosphate synthase (243 aa).

Asn-9 lines the 3-amino-2-oxopropyl phosphate pocket. 11–12 (DH) is a binding site for 1-deoxy-D-xylulose 5-phosphate. Residue Arg-20 coordinates 3-amino-2-oxopropyl phosphate. His-45 (proton acceptor) is an active-site residue. 2 residues coordinate 1-deoxy-D-xylulose 5-phosphate: Arg-47 and His-52. The Proton acceptor role is filled by Glu-72. A 1-deoxy-D-xylulose 5-phosphate-binding site is contributed by Thr-102. Residue His-193 is the Proton donor of the active site. 3-amino-2-oxopropyl phosphate is bound by residues Gly-194 and 215-216 (GH).

The protein belongs to the PNP synthase family. As to quaternary structure, homooctamer; tetramer of dimers.

It localises to the cytoplasm. The catalysed reaction is 3-amino-2-oxopropyl phosphate + 1-deoxy-D-xylulose 5-phosphate = pyridoxine 5'-phosphate + phosphate + 2 H2O + H(+). It participates in cofactor biosynthesis; pyridoxine 5'-phosphate biosynthesis; pyridoxine 5'-phosphate from D-erythrose 4-phosphate: step 5/5. In terms of biological role, catalyzes the complicated ring closure reaction between the two acyclic compounds 1-deoxy-D-xylulose-5-phosphate (DXP) and 3-amino-2-oxopropyl phosphate (1-amino-acetone-3-phosphate or AAP) to form pyridoxine 5'-phosphate (PNP) and inorganic phosphate. The polypeptide is Pyridoxine 5'-phosphate synthase (Shigella boydii serotype 4 (strain Sb227)).